Here is a 212-residue protein sequence, read N- to C-terminus: DNA-directed RNA polymerase III subunit RPC8 (212 aa).

Position 162 is a phosphoserine (serine 162). Basic and acidic residues predominate over residues 166–184 (RELEERAQLENEIEGKNEE). Positions 166-194 (RELEERAQLENEIEGKNEETPQNEKPPAY) are disordered.

It belongs to the eukaryotic RPB7/RPC8 RNA polymerase subunit family. Component of the RNA polymerase III (Pol III) complex consisting of 17 subunits. RPC25/RPC8 and RPC17/RPC9 form a Pol III subcomplex.

Its subcellular location is the nucleus. Functionally, DNA-dependent RNA polymerase catalyzes the transcription of DNA into RNA using the four ribonucleoside triphosphates as substrates. Specific peripheric component of RNA polymerase III which synthesizes small RNAs, such as 5S rRNA and tRNA. The RPC25/RPC8-RPC17/RPC9 subcomplex may bind Pol III transcripts emerging from the adjacent exit pore during elongation. This chain is DNA-directed RNA polymerase III subunit RPC8 (RPC25), found in Saccharomyces cerevisiae (strain ATCC 204508 / S288c) (Baker's yeast).